Here is a 251-residue protein sequence, read N- to C-terminus: Prothoracicostatic peptides (251 aa).

Positions 1–22 (MRKSARGQVCTEAGAGASGDWQ) are disordered. Positions 1–77 (MRKSARGQVC…GWQDLNSAWG (77 aa)) are excised as a propeptide. Residue Trp-89 is modified to Tryptophan amide. The propeptide occupies 93–138 (GWNDMSSAWGKRGWNDMSSAWGKRGWNDMSSAWGKRGWNDMSSAWG). At Trp-152 the chain carries Tryptophan amide. Residues 156–187 (AAEPDYEEIDAAIEQLIPIQQLSDNERMEVPE) constitute a propeptide that is removed on maturation. Trp-198 and Trp-228 each carry tryptophan amide. Residues 227-251 (MWGKRSAPDADAVDDDHESSARDEA) are disordered.

Prothoracicostatic peptide 5: Expressed in antennal lobe (AL), corpora cardiaca (CC), corpora allata (CA) and gnathal ganglion (GNG) (at protein level). Expression in AL detected in all animals, in CC, CA and GNG in most (at protein level). Prothoracicostatic peptide 6: Expressed in antennal lobe (AL), corpora cardiaca (CC), corpora allata (CA) and gnathal ganglion (GNG) (at protein level). Expression in AL detected in all animals, expression in GNG in most animals, in CA and CC detected in some animals (at protein level). Prothoracicostatic peptide 7: Expressed in antennal lobe (AL), corpora cardiaca (CC), corpora allata (CA) and gnathal ganglion (GNG) (at protein level). Expression in AL, CA and CC detected in most animals, expression in GNG in some animals (at protein level). Prothoracicostatic peptide precursor-related peptide 2: Expressed in antennal lobe (AL), corpora cardiaca (CC) and corpora allata (CA) with expression detected in few animals (at protein level). Not expressed in gnathal ganglion (GNG) (at protein level). Prothoracicostatic peptide 8: Expressed in antennal lobe (AL), corpora cardiaca (CC), corpora allata (CA) and gnathal ganglion (GNG) (at protein level). Expression in AL detected in all animals, expression in GNG in most animals, in CA and CC detected in some animals (at protein level). Prothoracicostatic peptide precursor-related peptide 3: Expressed in antennal lobe (AL) in few animals (at protein level). Not expressed in corpora cardiaca (CC), corpora allata (CA) and gnathal ganglion (GNG) (at protein level).

It localises to the secreted. The protein is Prothoracicostatic peptides of Agrotis ipsilon (Black cutworm moth).